Reading from the N-terminus, the 21-residue chain is Alpha-fibrinogenase A1 (21 aa).

The protein belongs to the peptidase S1 family. Snake venom subfamily. As to quaternary structure, monomer. As to expression, expressed by the venom gland.

Its subcellular location is the secreted. With respect to regulation, inhibited by PMSF, bovine aprotinin (APR), and soybean trypsin inhibitor (STI). Is not inhibited by EDTA, beta-mercaptoethanol, and high temperature (85 degrees Celsius). In terms of biological role, snake venom serine protease that completely cleaves fibrinogen Aalpha chain (FGA), partially cleaves Bbeta chain (FGB) and has no activity on gamma chain. Is more potent that A2 and A3 alpha-fibrinogenases. Very active within 5 minutes. This is Alpha-fibrinogenase A1 from Crotalus atrox (Western diamondback rattlesnake).